The following is a 377-amino-acid chain: Chaperone protein DnaJ (377 aa).

The J domain maps to 5–70; sequence DYYEVLGVSR…DKKAAYDQFG (66 aa). The CR-type zinc finger occupies 133 to 211; sequence GLTKELRIPT…CHGDGRVEKS (79 aa). Positions 146, 149, 163, 166, 185, 188, 199, and 202 each coordinate Zn(2+). 4 CXXCXGXG motif repeats span residues 146–153, 163–170, 185–192, and 199–206; these read CDLCEGSG, CGTCHGQG, CPTCHGRG, and CSKCHGDG.

The protein belongs to the DnaJ family. Homodimer. The cofactor is Zn(2+).

The protein resides in the cytoplasm. In terms of biological role, participates actively in the response to hyperosmotic and heat shock by preventing the aggregation of stress-denatured proteins and by disaggregating proteins, also in an autonomous, DnaK-independent fashion. Unfolded proteins bind initially to DnaJ; upon interaction with the DnaJ-bound protein, DnaK hydrolyzes its bound ATP, resulting in the formation of a stable complex. GrpE releases ADP from DnaK; ATP binding to DnaK triggers the release of the substrate protein, thus completing the reaction cycle. Several rounds of ATP-dependent interactions between DnaJ, DnaK and GrpE are required for fully efficient folding. Also involved, together with DnaK and GrpE, in the DNA replication of plasmids through activation of initiation proteins. The chain is Chaperone protein DnaJ from Shewanella baltica (strain OS195).